The following is a 329-amino-acid chain: Ketol-acid reductoisomerase (NADP(+)) (329 aa).

Residues 2–182 form the KARI N-terminal Rossmann domain; it reads ARMYYEKDVD…GATRAGVLET (181 aa). NADP(+) is bound by residues 25–28, Ser51, Ser53, and 83–86; these read YGSQ and DEKQ. The active site involves His108. Position 134 (Gly134) interacts with NADP(+). Residues 183 to 328 form the KARI C-terminal knotted domain; the sequence is TFKEETETDL…RNLRSMMSFL (146 aa). Mg(2+)-binding residues include Asp191, Glu195, Glu227, and Glu231. Residue Ser252 coordinates substrate.

This sequence belongs to the ketol-acid reductoisomerase family. The cofactor is Mg(2+).

The enzyme catalyses (2R)-2,3-dihydroxy-3-methylbutanoate + NADP(+) = (2S)-2-acetolactate + NADPH + H(+). It catalyses the reaction (2R,3R)-2,3-dihydroxy-3-methylpentanoate + NADP(+) = (S)-2-ethyl-2-hydroxy-3-oxobutanoate + NADPH + H(+). Its pathway is amino-acid biosynthesis; L-isoleucine biosynthesis; L-isoleucine from 2-oxobutanoate: step 2/4. It functions in the pathway amino-acid biosynthesis; L-valine biosynthesis; L-valine from pyruvate: step 2/4. In terms of biological role, involved in the biosynthesis of branched-chain amino acids (BCAA). Catalyzes an alkyl-migration followed by a ketol-acid reduction of (S)-2-acetolactate (S2AL) to yield (R)-2,3-dihydroxy-isovalerate. In the isomerase reaction, S2AL is rearranged via a Mg-dependent methyl migration to produce 3-hydroxy-3-methyl-2-ketobutyrate (HMKB). In the reductase reaction, this 2-ketoacid undergoes a metal-dependent reduction by NADPH to yield (R)-2,3-dihydroxy-isovalerate. The protein is Ketol-acid reductoisomerase (NADP(+)) of Clostridioides difficile (strain 630) (Peptoclostridium difficile).